The following is a 210-amino-acid chain: Outer surface protein C (210 aa).

The first 18 residues, 1 to 18 (MKKNTLSAILMTLFLFIS), serve as a signal peptide directing secretion. Residue Cys-19 is the site of N-palmitoyl cysteine attachment. Cys-19 carries the S-diacylglycerol cysteine lipid modification.

It belongs to the OspC lipoprotein family. In terms of assembly, homodimer. Binds human plasminogen on the bacterial surface, also binds human plasmin. Interacts with tick I.ricinus salivary protein Iric-1. Interacts with human complement C4 beta chain (C4B); whole bacteria bind to wells coated with C4b. Binding is inhibited by human complement factor C2.

It is found in the cell outer membrane. The protein localises to the cell surface. Its function is as follows. A major immunodominant protein in mammalian hosts. Required for the initial stages of mammalian infection. Interaction with tick I.ricinus salivary protein Salp15 protects the bacteria from antibody-mediated killing in vitro and in vivo. Inhibits macrophage-mediated phagocytosis of the bacteria. Binds human plasminogen; this probably confers an extracellular protease activity on the bacteria that allows it to traverse tissue. Binds human complement C4-B, which may inhibit the complement cascade. Experiments in mice suggest it may play another role after initial infection. The polypeptide is Outer surface protein C (Borreliella burgdorferi (strain ATCC 35210 / DSM 4680 / CIP 102532 / B31) (Borrelia burgdorferi)).